The sequence spans 181 residues: Alkyl hydroperoxide reductase AhpD (181 aa).

Cys-130 acts as the Proton donor in catalysis. The cysteines at positions 130 and 133 are disulfide-linked. The Cysteine sulfenic acid (-SOH) intermediate role is filled by Cys-133.

Belongs to the AhpD family.

It catalyses the reaction N(6)-[(R)-dihydrolipoyl]-L-lysyl-[lipoyl-carrier protein] + a hydroperoxide = N(6)-[(R)-lipoyl]-L-lysyl-[lipoyl-carrier protein] + an alcohol + H2O. Functionally, antioxidant protein with alkyl hydroperoxidase activity. Required for the reduction of the AhpC active site cysteine residues and for the regeneration of the AhpC enzyme activity. The protein is Alkyl hydroperoxide reductase AhpD of Gluconacetobacter diazotrophicus (strain ATCC 49037 / DSM 5601 / CCUG 37298 / CIP 103539 / LMG 7603 / PAl5).